The primary structure comprises 185 residues: Ribosome-recycling factor (185 aa).

This sequence belongs to the RRF family.

It localises to the cytoplasm. Its function is as follows. Responsible for the release of ribosomes from messenger RNA at the termination of protein biosynthesis. May increase the efficiency of translation by recycling ribosomes from one round of translation to another. The polypeptide is Ribosome-recycling factor (Pelobacter propionicus (strain DSM 2379 / NBRC 103807 / OttBd1)).